Here is a 295-residue protein sequence, read N- to C-terminus: Structure-specific endonuclease subunit SLX1 (295 aa).

Positions 11–93 (EFYGVYILQS…QHPKTSRHMA (83 aa)) constitute a GIY-YIG domain. The disordered stretch occupies residues 85-133 (HPKTSRHMAGGGGSVTATAETAKSAPVAGKSDATSPAKNRRNAAPVARS). The SLX1-type zinc-finger motif lies at 205-272 (CCLCSDAIDY…IPSDVSCSQC (68 aa)).

This sequence belongs to the SLX1 family. Forms a heterodimer with SLX4. The cofactor is a divalent metal cation.

It is found in the nucleus. Functionally, catalytic subunit of the SLX1-SLX4 structure-specific endonuclease that resolves DNA secondary structures generated during DNA repair and recombination. Has endonuclease activity towards branched DNA substrates, introducing single-strand cuts in duplex DNA close to junctions with ss-DNA. The chain is Structure-specific endonuclease subunit SLX1 from Meyerozyma guilliermondii (strain ATCC 6260 / CBS 566 / DSM 6381 / JCM 1539 / NBRC 10279 / NRRL Y-324) (Yeast).